Here is a 254-residue protein sequence, read N- to C-terminus: Serotonin N-acetyltransferase 1, chloroplastic (254 aa).

The N-terminal 74 residues, 1–74 (MAPAASASAS…LRSGFLKSNN (74 aa)), are a transit peptide targeting the chloroplast. The N-acetyltransferase domain maps to 111–254 (IIFSSAGDVN…IKGMFWYPRF (144 aa)).

This sequence belongs to the acetyltransferase family. In terms of tissue distribution, expressed in roots and shoots.

It is found in the plastid. The protein resides in the chloroplast. The protein localises to the nucleus. It catalyses the reaction serotonin + acetyl-CoA = N-acetylserotonin + CoA + H(+). It carries out the reaction tyramine + acetyl-CoA = N-acetyltyramine + CoA + H(+). The catalysed reaction is tryptamine + acetyl-CoA = N-acetyltryptamine + CoA + H(+). The enzyme catalyses 5-methoxytryptamine + acetyl-CoA = melatonin + CoA + H(+). It participates in aromatic compound metabolism; melatonin biosynthesis; melatonin from serotonin: step 1/2. In terms of biological role, catalyzes the N-acetylation of serotonin into N-acetylserotonin, the penultimate step in the synthesis of melatonin. Catalyzes in vitro the N-acetylation of tryptamine to produce N-acetyltryptamine, 5-methoxytryptamine to produce melatonin and tyramine to produce N-acetyltyramine. The protein is Serotonin N-acetyltransferase 1, chloroplastic of Oryza sativa subsp. japonica (Rice).